A 464-amino-acid chain; its full sequence is Vacuolar protein sorting-associated protein atg6 (464 aa).

The tract at residues 38-57 (SLTEMNESGESDDQMNSSSE) is disordered. Positions 144 to 274 (VECAELLTEE…NSRKLEKLQK (131 aa)) form a coiled coil. The segment at 275–461 (MNVFSDIFYI…EAYVSSQDKQ (187 aa)) is BARA.

Belongs to the beclin family. Component of the autophagy-specific vps34 PI3-kinase complex I composed of vps15, atg6, pik3/vps34, atg14 and atg38. Also a component of the vps34 PI3-kinase complex II composed of atg6, pik3, vps15 and vps38.

It is found in the endosome membrane. The protein localises to the vacuole membrane. It localises to the preautophagosomal structure membrane. Its subcellular location is the cytoplasm. Functions as a part of the autophagy-specific VPS34 PI3-kinase complex I that plays a role in autophagosome assembly. This complex is essential to recruit the atg8-phosphatidylinositol conjugate and the atg12-atg5 conjugate to the pre-autophagosomal structure. Also functions as part of the VPS34 PI3-kinase complex II. The chain is Vacuolar protein sorting-associated protein atg6 (atg6) from Schizosaccharomyces pombe (strain 972 / ATCC 24843) (Fission yeast).